The chain runs to 401 residues: ATP phosphoribosyltransferase regulatory subunit (401 aa).

It belongs to the class-II aminoacyl-tRNA synthetase family. HisZ subfamily. As to quaternary structure, heteromultimer composed of HisG and HisZ subunits.

The protein resides in the cytoplasm. Its pathway is amino-acid biosynthesis; L-histidine biosynthesis; L-histidine from 5-phospho-alpha-D-ribose 1-diphosphate: step 1/9. Its function is as follows. Required for the first step of histidine biosynthesis. May allow the feedback regulation of ATP phosphoribosyltransferase activity by histidine. This chain is ATP phosphoribosyltransferase regulatory subunit, found in Cyanothece sp. (strain PCC 7425 / ATCC 29141).